Here is a 388-residue protein sequence, read N- to C-terminus: GTPase Obg (388 aa).

The Obg domain occupies 1-159; it reads MKFVDEAVIR…RSLKLELLLL (159 aa). Residues 160–333 enclose the OBG-type G domain; sequence ADVGLLGMPN…LAAKLWDFIQ (174 aa). GTP contacts are provided by residues 166-173, 191-195, 213-216, 283-286, and 314-316; these read GMPNAGKS, FTTLV, DIPG, NKAD, and SAY. 2 residues coordinate Mg(2+): Ser173 and Thr193.

This sequence belongs to the TRAFAC class OBG-HflX-like GTPase superfamily. OBG GTPase family. In terms of assembly, monomer. The cofactor is Mg(2+).

The protein localises to the cytoplasm. Functionally, an essential GTPase which binds GTP, GDP and possibly (p)ppGpp with moderate affinity, with high nucleotide exchange rates and a fairly low GTP hydrolysis rate. Plays a role in control of the cell cycle, stress response, ribosome biogenesis and in those bacteria that undergo differentiation, in morphogenesis control. This chain is GTPase Obg, found in Shewanella oneidensis (strain ATCC 700550 / JCM 31522 / CIP 106686 / LMG 19005 / NCIMB 14063 / MR-1).